A 130-amino-acid polypeptide reads, in one-letter code: Methylglyoxal synthase (130 aa).

One can recognise an MGS-like domain in the interval 1 to 130 (MSKPRIALIA…DLARNMQDVC (130 aa)). Residues His11, Lys15, 37–40 (TGTT), and 57–58 (SG) contribute to the substrate site. The active-site Proton donor/acceptor is the Asp63. His90 lines the substrate pocket.

The protein belongs to the methylglyoxal synthase family.

It catalyses the reaction dihydroxyacetone phosphate = methylglyoxal + phosphate. In terms of biological role, catalyzes the formation of methylglyoxal from dihydroxyacetone phosphate. The sequence is that of Methylglyoxal synthase from Burkholderia lata (strain ATCC 17760 / DSM 23089 / LMG 22485 / NCIMB 9086 / R18194 / 383).